The following is a 215-amino-acid chain: Urease accessory protein UreG (215 aa).

GTP is bound at residue 15–22; that stretch reads GPVGSGKT.

The protein belongs to the SIMIBI class G3E GTPase family. UreG subfamily. In terms of assembly, homodimer. UreD, UreF and UreG form a complex that acts as a GTP-hydrolysis-dependent molecular chaperone, activating the urease apoprotein by helping to assemble the nickel containing metallocenter of UreC. The UreE protein probably delivers the nickel.

The protein resides in the cytoplasm. In terms of biological role, facilitates the functional incorporation of the urease nickel metallocenter. This process requires GTP hydrolysis, probably effectuated by UreG. This Alcanivorax borkumensis (strain ATCC 700651 / DSM 11573 / NCIMB 13689 / SK2) protein is Urease accessory protein UreG.